The primary structure comprises 290 residues: Short-chain dehydrogenase srdE (290 aa).

Residues I11, T37, D58, and N86 each contribute to the NADP(+) site. Residues L125–V145 traverse the membrane as a helical segment. Position 150 (Y150) interacts with NADP(+). Y150 (proton donor) is an active-site residue. N151 carries an N-linked (GlcNAc...) asparagine glycan. Residues K154, V183, and T185 each coordinate NADP(+). The Lowers pKa of active site Tyr role is filled by K154.

Belongs to the short-chain dehydrogenases/reductases (SDR) family.

It is found in the membrane. In terms of biological role, short-chain dehydrogenase; part of the gene cluster that mediates the biosynthesis of sordarial, a salicylic aldehyde structurally related to the phytotoxin pyriculol. The most interesting aspect of this pathway is formation of an aromatic product from the highly reducing polyketide synthase srdA. SrdA synthesizes a reduced polyketide chain from one molecule of acetyl-CoA and five molecules of malonyl-CoA. The polyketide chain is then reductively released as an aldehyde. The oxidoreductases srdC, srdD and srdE then oxidize one of the hydroxy groups to facilitate the intramolecular aldol condensation, followed by dehydration to yield a salicylic aldehyde. This aldehyde can undergo facile reduction by endogenous reductases to yield the alcohol 1-hydroxy-2-hydroxymethyl-3-pent-1,3-dienylbenzene. The flavin-dependent srdI counteract against the propensity of the aldehydes to be reduced under physiological conditions and is responsible for reoxidizing 1-hydroxy-2-hydroxymethyl-3-pent-1,3-dienylbenzene back to the salicylic aldehyde. This salicylic aldehyde is then selectively epoxidized by the cupin-domain-containing oxidoreductase srdB to yield the epoxide, which can be hydrolyzed stereoselectively by the hydrolase srdG to give the final product sordarial. The polypeptide is Short-chain dehydrogenase srdE (Neurospora crassa (strain ATCC 24698 / 74-OR23-1A / CBS 708.71 / DSM 1257 / FGSC 987)).